A 199-amino-acid chain; its full sequence is Fe/S biogenesis protein NfuA (199 aa).

Residues cysteine 151 and cysteine 154 each contribute to the [4Fe-4S] cluster site.

This sequence belongs to the NfuA family. As to quaternary structure, homodimer. Requires [4Fe-4S] cluster as cofactor.

In terms of biological role, involved in iron-sulfur cluster biogenesis. Binds a 4Fe-4S cluster, can transfer this cluster to apoproteins, and thereby intervenes in the maturation of Fe/S proteins. Could also act as a scaffold/chaperone for damaged Fe/S proteins. The protein is Fe/S biogenesis protein NfuA of Xylella fastidiosa (strain M12).